Here is a 501-residue protein sequence, read N- to C-terminus: Lysine--tRNA ligase (501 aa).

Mg(2+)-binding residues include Glu-412 and Glu-419.

This sequence belongs to the class-II aminoacyl-tRNA synthetase family. As to quaternary structure, homodimer. Mg(2+) is required as a cofactor.

It is found in the cytoplasm. The catalysed reaction is tRNA(Lys) + L-lysine + ATP = L-lysyl-tRNA(Lys) + AMP + diphosphate. The protein is Lysine--tRNA ligase of Dechloromonas aromatica (strain RCB).